Consider the following 275-residue polypeptide: Thiazole synthase (275 aa).

Lysine 108 functions as the Schiff-base intermediate with DXP in the catalytic mechanism. 1-deoxy-D-xylulose 5-phosphate-binding positions include glycine 169, 196–197, and 218–219; these read AG and NT.

Belongs to the ThiG family. Homotetramer. Forms heterodimers with either ThiH or ThiS.

The protein localises to the cytoplasm. The catalysed reaction is [ThiS sulfur-carrier protein]-C-terminal-Gly-aminoethanethioate + 2-iminoacetate + 1-deoxy-D-xylulose 5-phosphate = [ThiS sulfur-carrier protein]-C-terminal Gly-Gly + 2-[(2R,5Z)-2-carboxy-4-methylthiazol-5(2H)-ylidene]ethyl phosphate + 2 H2O + H(+). It functions in the pathway cofactor biosynthesis; thiamine diphosphate biosynthesis. Its function is as follows. Catalyzes the rearrangement of 1-deoxy-D-xylulose 5-phosphate (DXP) to produce the thiazole phosphate moiety of thiamine. Sulfur is provided by the thiocarboxylate moiety of the carrier protein ThiS. In vitro, sulfur can be provided by H(2)S. This Ralstonia pickettii (strain 12J) protein is Thiazole synthase.